The sequence spans 432 residues: Probable exopolygalacturonase X (432 aa).

Positions 1–23 are cleaved as a signal peptide; the sequence is MKFSYSFVQVVSLLLSLSPSVEG. 3 N-linked (GlcNAc...) asparagine glycosylation sites follow: asparagine 113, asparagine 129, and asparagine 199. Residues 231–252 form a PbH1 1 repeat; the sequence is SDNIVIQNSVINNGDDCVSFKP. Aspartate 245 acts as the Proton donor in catalysis. Cysteine 247 and cysteine 264 are oxidised to a cystine. N-linked (GlcNAc...) asparagine glycosylation is found at asparagine 253 and asparagine 265. 3 PbH1 repeats span residues 254–274, 285–306, and 327–348; these read STNI…SVGS, VQNV…RIKV, and VKNI…EVTQ. Histidine 268 is an active-site residue. 5 N-linked (GlcNAc...) asparagine glycosylation sites follow: asparagine 292, asparagine 297, asparagine 329, asparagine 354, and asparagine 364. A PbH1 5 repeat occupies 362 to 394; it reads PSNLTISDIHFKNFRGTTSGKRDPDVGTIVCSS. Cysteine 392 and cysteine 398 are joined by a disulfide.

This sequence belongs to the glycosyl hydrolase 28 family.

It is found in the secreted. It carries out the reaction [(1-&gt;4)-alpha-D-galacturonosyl](n) + H2O = alpha-D-galacturonate + [(1-&gt;4)-alpha-D-galacturonosyl](n-1). In terms of biological role, specific in hydrolyzing the terminal glycosidic bond of polygalacturonic acid and oligogalacturonates. The sequence is that of Probable exopolygalacturonase X (pgaX) from Neosartorya fischeri (strain ATCC 1020 / DSM 3700 / CBS 544.65 / FGSC A1164 / JCM 1740 / NRRL 181 / WB 181) (Aspergillus fischerianus).